The following is a 1595-amino-acid chain: Pentafunctional AROM polypeptide (1595 aa).

Residues 1–384 form a 3-dehydroquinate synthase region; the sequence is MGVPTKISIL…HEPRASTVSN (384 aa). NAD(+) is bound by residues 44 to 46, 81 to 84, 114 to 116, and aspartate 119; these read DTN, ESSK, and GGV. A 7-phospho-2-dehydro-3-deoxy-D-arabino-heptonate-binding site is contributed by arginine 130. 139–140 contributes to the NAD(+) binding site; it reads TT. Residues aspartate 146 and lysine 152 each coordinate 7-phospho-2-dehydro-3-deoxy-D-arabino-heptonate. Lysine 161 provides a ligand contact to NAD(+). Residue asparagine 162 coordinates 7-phospho-2-dehydro-3-deoxy-D-arabino-heptonate. Residues 179 to 182 and asparagine 190 each bind NAD(+); that span reads FLNT. Glutamate 194 serves as a coordination point for Zn(2+). 7-phospho-2-dehydro-3-deoxy-D-arabino-heptonate-binding positions include 194–197 and lysine 250; that span reads EVIK. Glutamate 260 (proton acceptor; for 3-dehydroquinate synthase activity) is an active-site residue. 7-phospho-2-dehydro-3-deoxy-D-arabino-heptonate is bound by residues 264 to 268 and histidine 271; that span reads RNLLN. Histidine 271 contacts Zn(2+). The Proton acceptor; for 3-dehydroquinate synthase activity role is filled by histidine 275. The 7-phospho-2-dehydro-3-deoxy-D-arabino-heptonate site is built by histidine 287 and lysine 356. Zn(2+) is bound at residue histidine 287. The tract at residues 397–842 is EPSP synthase; it reads VSPGVPKGLD…WDSLAQTFKV (446 aa). The active-site For EPSP synthase activity is the cysteine 824. Positions 866–1057 are shikimate kinase; it reads ASIFIIGMRG…RRKENTFFVS (192 aa). Residue 872-879 coordinates ATP; that stretch reads GMRGAGKT. The 3-dehydroquinase stretch occupies residues 1058 to 1278; the sequence is LTLPDLGLAA…AAPGQLSARE (221 aa). Catalysis depends on histidine 1181, which acts as the Proton acceptor; for 3-dehydroquinate dehydratase activity. The active-site Schiff-base intermediate with substrate; for 3-dehydroquinate dehydratase activity is lysine 1209. Residues 1291 to 1595 form a shikimate dehydrogenase region; that stretch reads AKKFAVIGNP…MGVLPSEDIS (305 aa).

In the N-terminal section; belongs to the sugar phosphate cyclases superfamily. Dehydroquinate synthase family. The protein in the 2nd section; belongs to the EPSP synthase family. This sequence in the 3rd section; belongs to the shikimate kinase family. It in the 4th section; belongs to the type-I 3-dehydroquinase family. In the C-terminal section; belongs to the shikimate dehydrogenase family. Homodimer. Zn(2+) is required as a cofactor.

It localises to the cytoplasm. The catalysed reaction is 7-phospho-2-dehydro-3-deoxy-D-arabino-heptonate = 3-dehydroquinate + phosphate. The enzyme catalyses 3-dehydroquinate = 3-dehydroshikimate + H2O. It carries out the reaction shikimate + NADP(+) = 3-dehydroshikimate + NADPH + H(+). It catalyses the reaction shikimate + ATP = 3-phosphoshikimate + ADP + H(+). The catalysed reaction is 3-phosphoshikimate + phosphoenolpyruvate = 5-O-(1-carboxyvinyl)-3-phosphoshikimate + phosphate. It participates in metabolic intermediate biosynthesis; chorismate biosynthesis; chorismate from D-erythrose 4-phosphate and phosphoenolpyruvate: step 2/7. It functions in the pathway metabolic intermediate biosynthesis; chorismate biosynthesis; chorismate from D-erythrose 4-phosphate and phosphoenolpyruvate: step 3/7. Its pathway is metabolic intermediate biosynthesis; chorismate biosynthesis; chorismate from D-erythrose 4-phosphate and phosphoenolpyruvate: step 4/7. The protein operates within metabolic intermediate biosynthesis; chorismate biosynthesis; chorismate from D-erythrose 4-phosphate and phosphoenolpyruvate: step 5/7. It participates in metabolic intermediate biosynthesis; chorismate biosynthesis; chorismate from D-erythrose 4-phosphate and phosphoenolpyruvate: step 6/7. In terms of biological role, the AROM polypeptide catalyzes 5 consecutive enzymatic reactions in prechorismate polyaromatic amino acid biosynthesis. This chain is Pentafunctional AROM polypeptide, found in Ajellomyces capsulatus (strain H143) (Darling's disease fungus).